We begin with the raw amino-acid sequence, 203 residues long: Large ribosomal subunit protein uL22 (203 aa).

The span at 138-167 shows a compositional bias: polar residues; the sequence is PENTQSGALSQQSQAEQPQNDPENGVDSQL. Positions 138-203 are disordered; sequence PENTQSGALS…TVLAQEKEVK (66 aa). Residues 168–177 are compositionally biased toward low complexity; sequence SAKTNSTTTA. Residues 183–196 show a composition bias toward polar residues; the sequence is ADNSTKNDATNTVL.

The protein belongs to the universal ribosomal protein uL22 family. In terms of assembly, part of the 50S ribosomal subunit.

Its function is as follows. This protein binds specifically to 23S rRNA; its binding is stimulated by other ribosomal proteins, e.g. L4, L17, and L20. It is important during the early stages of 50S assembly. It makes multiple contacts with different domains of the 23S rRNA in the assembled 50S subunit and ribosome. The globular domain of the protein is located near the polypeptide exit tunnel on the outside of the subunit, while an extended beta-hairpin is found that lines the wall of the exit tunnel in the center of the 70S ribosome. This chain is Large ribosomal subunit protein uL22, found in Mesomycoplasma hyopneumoniae (strain 7448) (Mycoplasma hyopneumoniae).